A 262-amino-acid polypeptide reads, in one-letter code: Zinc-finger homeodomain protein 6 (262 aa).

Composition is skewed to basic and acidic residues over residues 1–25 and 36–47; these read MEVR…DHHR and NKEKPTTKRNGS. The disordered stretch occupies residues 1-93; it reads MEVREKKDEK…ECQKNHAASS (93 aa). A ZF-HD dimerization-type; degenerate zinc finger spans residues 82–131; sequence YRECQKNHAASSGGHVVDGCGEFMSSGEEGTVESLLCAACDCHRSFHRKE. Positions 198 to 261 form a DNA-binding region, homeobox; the sequence is KKRFRTKFNE…NNKQAAKKKD (64 aa).

Homo- and heterodimer with other ZFHD proteins. Interacts with MIF1 and MIF3; these interactions prevent nuclear localization and DNA-binding to inhibit transcription regulation activity. Binds to ZHD1, ZHD2, ZHD10 and ZHD11. In terms of tissue distribution, expressed in seedlings, roots, leaves, stems, flowers and inflorescence.

It is found in the nucleus. Functionally, putative transcription factor. In Arabidopsis thaliana (Mouse-ear cress), this protein is Zinc-finger homeodomain protein 6 (ZHD6).